The primary structure comprises 825 residues: Probable inorganic carbon transporter subunit DabA (825 aa).

Zn(2+)-binding residues include C346, D348, H516, and C531.

The protein belongs to the inorganic carbon transporter (TC 9.A.2) DabA family. As to quaternary structure, forms a complex with DabB. Zn(2+) serves as cofactor.

It localises to the cell inner membrane. In terms of biological role, part of an energy-coupled inorganic carbon pump. The protein is Probable inorganic carbon transporter subunit DabA of Paracidovorax citrulli (strain AAC00-1) (Acidovorax citrulli).